The following is a 355-amino-acid chain: S-adenosylmethionine:tRNA ribosyltransferase-isomerase (355 aa).

It belongs to the QueA family. In terms of assembly, monomer.

The protein resides in the cytoplasm. It carries out the reaction 7-aminomethyl-7-carbaguanosine(34) in tRNA + S-adenosyl-L-methionine = epoxyqueuosine(34) in tRNA + adenine + L-methionine + 2 H(+). It functions in the pathway tRNA modification; tRNA-queuosine biosynthesis. Its function is as follows. Transfers and isomerizes the ribose moiety from AdoMet to the 7-aminomethyl group of 7-deazaguanine (preQ1-tRNA) to give epoxyqueuosine (oQ-tRNA). The polypeptide is S-adenosylmethionine:tRNA ribosyltransferase-isomerase (Burkholderia ambifaria (strain ATCC BAA-244 / DSM 16087 / CCUG 44356 / LMG 19182 / AMMD) (Burkholderia cepacia (strain AMMD))).